The following is a 263-amino-acid chain: Troponin T, fast skeletal muscle isoforms (263 aa).

Positions 1 to 26 (MSDTEEVEHGEEEYEEEAHEAEEVHE) are enriched in acidic residues. Disordered regions lie at residues 1 to 66 (MSDT…FDDI), 107 to 188 (RAER…VLAE), and 243 to 263 (DQAQ…GRWK). An N-acetylserine modification is found at Ser2. Basic and acidic residues-rich tracts occupy residues 56 to 66 (PEGEKVDFDDI), 107 to 149 (RAER…DDLK), and 177 to 188 (TARETKKKVLAE). Positions 247 to 263 (KHSKKAGAKGKVGGRWK) are enriched in basic residues.

It belongs to the troponin T family.

Troponin T is the tropomyosin-binding subunit of troponin, the thin filament regulatory complex which confers calcium-sensitivity to striated muscle actomyosin ATPase activity. The protein is Troponin T, fast skeletal muscle isoforms (TNNT3) of Gallus gallus (Chicken).